An 83-amino-acid polypeptide reads, in one-letter code: Apolipoprotein C-I, basic form (83 aa).

A signal peptide spans 1–26 (MRLFLSLPVLVVVLSMVLEGPAPAQG).

It belongs to the apolipoprotein C1 family.

Its subcellular location is the secreted. Inhibitor of lipoprotein binding to the low density lipoprotein (LDL) receptor, LDL receptor-related protein, and very low density lipoprotein (VLDL) receptor. Associates with high density lipoproteins (HDL) and the triacylglycerol-rich lipoproteins in the plasma and makes up about 10% of the protein of the VLDL and 2% of that of HDL. Appears to interfere directly with fatty acid uptake and is also the major plasma inhibitor of cholesteryl ester transfer protein (CETP). Binds free fatty acids and reduces their intracellular esterification. Modulates the interaction of APOE with beta-migrating VLDL and inhibits binding of beta-VLDL to the LDL receptor-related protein. The polypeptide is Apolipoprotein C-I, basic form (APOC1B) (Cercocebus atys (Sooty mangabey)).